Here is a 422-residue protein sequence, read N- to C-terminus: Glutamyl-tRNA reductase (422 aa).

Substrate is bound by residues 49-52 (TCNR), Ser-110, 115-117 (EPQ), and Gln-121. The Nucleophile role is filled by Cys-50. Residue 190-195 (GAGETI) participates in NADP(+) binding.

This sequence belongs to the glutamyl-tRNA reductase family. In terms of assembly, homodimer.

The enzyme catalyses (S)-4-amino-5-oxopentanoate + tRNA(Glu) + NADP(+) = L-glutamyl-tRNA(Glu) + NADPH + H(+). The protein operates within porphyrin-containing compound metabolism; protoporphyrin-IX biosynthesis; 5-aminolevulinate from L-glutamyl-tRNA(Glu): step 1/2. Functionally, catalyzes the NADPH-dependent reduction of glutamyl-tRNA(Glu) to glutamate 1-semialdehyde (GSA). The polypeptide is Glutamyl-tRNA reductase (Colwellia psychrerythraea (strain 34H / ATCC BAA-681) (Vibrio psychroerythus)).